We begin with the raw amino-acid sequence, 340 residues long: Deubiquitinase SseL (340 aa).

Histidine 223 is an active-site residue. Cysteine 285 functions as the Nucleophile in the catalytic mechanism.

This sequence belongs to the peptidase C79 family.

Its subcellular location is the secreted. It is found in the host cytoplasm. In terms of biological role, effector proteins function to alter host cell physiology and promote bacterial survival in host tissues. This protease targets the host cell ubiquitin pathway by acting as a deubiquitinase in infected host cells. Specifically hydrolyzes mono- and polyubiquitin substrates in vitro with a preference for 'Lys-63'-linked ubiquitin chains, suggesting that it interferes with a signaling pathway rather than inhibiting proteasomal-dependent degradation of its targets. Does not possess desumoylating activity. Is required for the Salmonella-induced delayed cytotoxicity in macrophages and full virulence. Is not required for intracellular bacterial replication. In Salmonella typhimurium (strain LT2 / SGSC1412 / ATCC 700720), this protein is Deubiquitinase SseL (sseL).